Consider the following 144-residue polypeptide: Large ribosomal subunit protein uL15 (144 aa).

The tract at residues 1–57 is disordered; that stretch reads MFLNTLRPGEGSKHAPKRVGRGIGSGLGKTGGRGHKGLKSRSGGSVKPGFEGGQMPL. A compositionally biased stretch (gly residues) spans 21–31; that stretch reads RGIGSGLGKTG.

It belongs to the universal ribosomal protein uL15 family. As to quaternary structure, part of the 50S ribosomal subunit.

In terms of biological role, binds to the 23S rRNA. The polypeptide is Large ribosomal subunit protein uL15 (Marinomonas sp. (strain MWYL1)).